Reading from the N-terminus, the 341-residue chain is MTKPTILTGDRPTGKLHIGHYVGSLQNRVKMQNEDKYNMFVFLADQQALTDHAKEPELIRQSVGDVALDYLAAGLDPEKSTIFIQSQIPELAELSMYYMNLVSLARLERNPTVKTEIAQKAFGESIPAGFLVYPVSQAADITAFKATHVPVGNDQKPMIEQTREIVRSFNNAYHTDVLVEPEGIYPENEAAGRLPGLDGNAKMSKSLGNGIFLADDMDTLKKKVMSMYTDPDHIKVEDPGKIEGNMVFHYLDVFGKAEDAEQISEMKAQYQAGGLGDVKTKRFLLDVLDRELSPIRERRIEFAQNMDYVYDMLKAGSLKAQAVASQTLDEVKSAMGINYFK.

Residues 11-13 and 19-20 each bind ATP; these read RPT and GH. The 'HIGH' region motif lies at 12 to 20; sequence PTGKLHIGH. An L-tryptophan-binding site is contributed by Asp-140. Residues 152 to 154, Leu-194, and 202 to 206 contribute to the ATP site; these read GND and KMSKS. A 'KMSKS' region motif is present at residues 202-206; sequence KMSKS.

This sequence belongs to the class-I aminoacyl-tRNA synthetase family. As to quaternary structure, homodimer.

It is found in the cytoplasm. It catalyses the reaction tRNA(Trp) + L-tryptophan + ATP = L-tryptophyl-tRNA(Trp) + AMP + diphosphate + H(+). Its function is as follows. Catalyzes the attachment of tryptophan to tRNA(Trp). The chain is Tryptophan--tRNA ligase from Lactococcus lactis subsp. lactis (strain IL1403) (Streptococcus lactis).